The sequence spans 88 residues: Eclosion hormone (88 aa).

A signal peptide spans methionine 1 to cysteine 26. 3 disulfide bridges follow: cysteine 40–cysteine 64, cysteine 44–cysteine 60, and cysteine 47–cysteine 75.

It belongs to the insect eclosion hormone family.

The protein resides in the secreted. Its function is as follows. Neuropeptide that triggers the performance of ecdysis behaviors at the end of a molt. It triggers adult behavior patterns: larval, pupal and adult ecdysis, and plasticization during the molt. The sequence is that of Eclosion hormone from Bombyx mori (Silk moth).